We begin with the raw amino-acid sequence, 205 residues long: Disintegrin-like leberagin-C (205 aa).

Positions 4–90 constitute a Disintegrin domain; that stretch reads PPVCGNELLE…DCPIDRFHRN (87 aa). 9 cysteine pairs are disulfide-bonded: cysteine 7-cysteine 26, cysteine 18-cysteine 36, cysteine 62-cysteine 82, cysteine 69-cysteine 94, cysteine 101-cysteine 106, cysteine 113-cysteine 128, cysteine 151-cysteine 158, cysteine 163-cysteine 171, and cysteine 193-cysteine 198. The D/ECD-tripeptide motif lies at 68 to 70; that stretch reads ECD. N-linked (GlcNAc...) asparagine glycosylation occurs at asparagine 120.

The protein belongs to the venom metalloproteinase (M12B) family. P-III subfamily. P-IIIb sub-subfamily. As to quaternary structure, monomer. As to expression, expressed by the venom gland.

The protein localises to the secreted. In terms of biological role, inhibits platelet aggregation induced by thrombin and arachidonic acid with IC(50) of 40 and 50 nM respectively (in rabbit platetelet-rich plasma). It also inhibits the adhesion of melanoma tumor cells on fibrinogen and fibronectin, by interfering with the function of alpha-V/beta-3 (ITGAV/ITGB3) and, to a lesser extent, with alpha-V/beta-6 (ITGAV/ITGB6) and alpha-5/beta-1 (ITGA5/ITGB1) integrins. This chain is Disintegrin-like leberagin-C, found in Macrovipera lebetina transmediterranea (Blunt-nosed viper).